The following is a 522-amino-acid chain: AAA ATPase forming ring-shaped complexes (522 aa).

The tract at residues 1–26 (MGQEKHTDAASQSRDPEAVAAHENDQ) is disordered. Positions 20–57 (AAHENDQLRQRNHALAKALTRATEELRKAKAQLEQFMA) form a coiled coil. Residue 248-253 (GNGKTL) coordinates ATP.

This sequence belongs to the AAA ATPase family. Homohexamer. Assembles into a hexameric ring structure.

This is AAA ATPase forming ring-shaped complexes from Bifidobacterium animalis subsp. lactis (strain AD011).